A 701-amino-acid chain; its full sequence is Ribosomal RNA large subunit methyltransferase K/L (701 aa).

The region spanning leucine 43–leucine 154 is the THUMP domain.

This sequence belongs to the methyltransferase superfamily. RlmKL family.

The protein localises to the cytoplasm. The catalysed reaction is guanosine(2445) in 23S rRNA + S-adenosyl-L-methionine = N(2)-methylguanosine(2445) in 23S rRNA + S-adenosyl-L-homocysteine + H(+). The enzyme catalyses guanosine(2069) in 23S rRNA + S-adenosyl-L-methionine = N(2)-methylguanosine(2069) in 23S rRNA + S-adenosyl-L-homocysteine + H(+). In terms of biological role, specifically methylates the guanine in position 2445 (m2G2445) and the guanine in position 2069 (m7G2069) of 23S rRNA. This chain is Ribosomal RNA large subunit methyltransferase K/L, found in Klebsiella pneumoniae subsp. pneumoniae (strain ATCC 700721 / MGH 78578).